The following is a 316-amino-acid chain: Ninja-family protein 2 (316 aa).

Disordered regions lie at residues 1 to 29 and 72 to 236; these read MASR…GEPD and TSDD…TSTG. Basic and acidic residues predominate over residues 99 to 108; it reads ERWRRREMQS. A compositionally biased stretch (polar residues) spans 156–166; sequence DQGNTSSSMPE. Low complexity-rich tracts occupy residues 179 to 199 and 222 to 235; these read SSME…QNKS and LRTL…TTST.

It belongs to the Ninja family.

Its subcellular location is the nucleus. This chain is Ninja-family protein 2 (AFP-B1), found in Triticum aestivum (Wheat).